Consider the following 175-residue polypeptide: ATP synthase subunit delta (175 aa).

This sequence belongs to the ATPase delta chain family. F-type ATPases have 2 components, F(1) - the catalytic core - and F(0) - the membrane proton channel. F(1) has five subunits: alpha(3), beta(3), gamma(1), delta(1), epsilon(1). F(0) has three main subunits: a(1), b(2) and c(10-14). The alpha and beta chains form an alternating ring which encloses part of the gamma chain. F(1) is attached to F(0) by a central stalk formed by the gamma and epsilon chains, while a peripheral stalk is formed by the delta and b chains.

It localises to the cell inner membrane. F(1)F(0) ATP synthase produces ATP from ADP in the presence of a proton or sodium gradient. F-type ATPases consist of two structural domains, F(1) containing the extramembraneous catalytic core and F(0) containing the membrane proton channel, linked together by a central stalk and a peripheral stalk. During catalysis, ATP synthesis in the catalytic domain of F(1) is coupled via a rotary mechanism of the central stalk subunits to proton translocation. In terms of biological role, this protein is part of the stalk that links CF(0) to CF(1). It either transmits conformational changes from CF(0) to CF(1) or is implicated in proton conduction. The protein is ATP synthase subunit delta of Xanthomonas euvesicatoria pv. vesicatoria (strain 85-10) (Xanthomonas campestris pv. vesicatoria).